The following is a 106-amino-acid chain: Iron-sulfur cluster assembly protein CyaY (106 aa).

It belongs to the frataxin family.

In terms of biological role, involved in iron-sulfur (Fe-S) cluster assembly. May act as a regulator of Fe-S biogenesis. This is Iron-sulfur cluster assembly protein CyaY from Salmonella dublin (strain CT_02021853).